A 303-amino-acid polypeptide reads, in one-letter code: ATP phosphoribosyltransferase (303 aa).

It belongs to the ATP phosphoribosyltransferase family. Long subfamily. It depends on Mg(2+) as a cofactor.

Its subcellular location is the cytoplasm. It catalyses the reaction 1-(5-phospho-beta-D-ribosyl)-ATP + diphosphate = 5-phospho-alpha-D-ribose 1-diphosphate + ATP. It functions in the pathway amino-acid biosynthesis; L-histidine biosynthesis; L-histidine from 5-phospho-alpha-D-ribose 1-diphosphate: step 1/9. Feedback inhibited by histidine. Functionally, catalyzes the condensation of ATP and 5-phosphoribose 1-diphosphate to form N'-(5'-phosphoribosyl)-ATP (PR-ATP). Has a crucial role in the pathway because the rate of histidine biosynthesis seems to be controlled primarily by regulation of HisG enzymatic activity. This is ATP phosphoribosyltransferase from Haemophilus influenzae (strain PittGG).